Reading from the N-terminus, the 928-residue chain is Eukaryotic translation initiation factor 3 subunit C (928 aa).

Disordered stretches follow at residues 1–37 (MSRF…SDDE) and 157–286 (FREA…EDGE). The span at 11–20 (SESESSEEEV) shows a compositional bias: acidic residues. A compositionally biased stretch (polar residues) spans 22 to 33 (TQFNNKAQNFQF). Phosphoserine occurs at positions 34, 165, 177, and 186. Residues 162–171 (DQESDVDEGE) are compositionally biased toward acidic residues. Positions 172–184 (GDVHDSDADRAGD) are enriched in basic and acidic residues. Residues 215-240 (DDDDSEDSIDWDPDTESETESSEDEN) are compositionally biased toward acidic residues. The segment covering 245–264 (MRERFLKRTTEKEDKDDDKR) has biased composition (basic and acidic residues). The span at 265-277 (KDKRKEQKHKVRK) shows a compositional bias: basic residues. In terms of domain architecture, PCI spans 656–832 (FHMHINLELL…ETVVMHRSEP (177 aa)). Positions 864-928 (FFQRGNMGNR…QQQVHTIDEE (65 aa)) are disordered. Basic residues predominate over residues 898-909 (QRNRNQRGHHKQ). A compositionally biased stretch (low complexity) spans 910–921 (NQQQNQQQQQQQ).

The protein belongs to the eIF-3 subunit C family. In terms of assembly, component of the eukaryotic translation initiation factor 3 (eIF-3) complex. The eIF-3 complex interacts with pix.

It localises to the cytoplasm. In terms of biological role, component of the eukaryotic translation initiation factor 3 (eIF-3) complex, which is involved in protein synthesis of a specialized repertoire of mRNAs and, together with other initiation factors, stimulates binding of mRNA and methionyl-tRNAi to the 40S ribosome. The eIF-3 complex specifically targets and initiates translation of a subset of mRNAs involved in cell proliferation. In Drosophila grimshawi (Hawaiian fruit fly), this protein is Eukaryotic translation initiation factor 3 subunit C.